Consider the following 141-residue polypeptide: ATP synthase F(0) complex subunit C3, mitochondrial (141 aa).

The transit peptide at 1–66 (MFACAKLART…REFQTSVISR (66 aa)) directs the protein to the mitochondrion. Residues 82 to 102 (VGVAGSGAGIGTVFGSLIIGY) form a helical membrane-spanning segment. Lys-109 is modified (N6,N6,N6-trimethyllysine). The helical transmembrane segment at 117 to 137 (ILGFALSEAMGLFCLMVAFLI) threads the bilayer.

The protein belongs to the ATPase C chain family. As to quaternary structure, F-type ATPases have 2 components, CF(1) - the catalytic core - and CF(0) - the membrane proton channel. CF(1) has five subunits: alpha(3), beta(3), gamma(1), delta(1), epsilon(1). CF(0) has three main subunits: a, b and c. Interacts with TMEM70 and TMEM242. In terms of processing, trimethylated by ATPSCKMT at Lys-109. Methylation is required for proper incorporation of the C subunit into the ATP synthase complex and mitochondrial respiration.

Its subcellular location is the mitochondrion membrane. Its function is as follows. Mitochondrial membrane ATP synthase (F(1)F(0) ATP synthase or Complex V) produces ATP from ADP in the presence of a proton gradient across the membrane which is generated by electron transport complexes of the respiratory chain. F-type ATPases consist of two structural domains, F(1) - containing the extramembraneous catalytic core and F(0) - containing the membrane proton channel, linked together by a central stalk and a peripheral stalk. During catalysis, ATP synthesis in the catalytic domain of F(1) is coupled via a rotary mechanism of the central stalk subunits to proton translocation. Part of the complex F(0) domain. A homomeric c-ring of probably 10 subunits is part of the complex rotary element. In Mus musculus (Mouse), this protein is ATP synthase F(0) complex subunit C3, mitochondrial.